The chain runs to 543 residues: Phosphatidylinositol/phosphatidylcholine transfer protein SFH12 (543 aa).

In terms of domain architecture, CRAL-TRIO spans 120–294; sequence EIDEVLKYYP…FLGGSCTCAD (175 aa). The interval 316 to 356 is disordered; it reads HNGDHKCSKGSQAENSGEKTIPEEDDSTTEPASEEEKASKE. A coiled-coil region spans residues 490–526; the sequence is DKEEMLNAAISRSNVLEQELAATKKALDDSLGRQEEL.

The protein belongs to the SFH family. In terms of tissue distribution, specifically expressed in flowers.

Its subcellular location is the golgi apparatus membrane. The protein localises to the cell membrane. In terms of biological role, required for transport of secretory proteins from the Golgi complex. Catalyzes the transfer of phosphatidylinositol and phosphatidylcholine between membranes in vitro. The sequence is that of Phosphatidylinositol/phosphatidylcholine transfer protein SFH12 (SFH12) from Arabidopsis thaliana (Mouse-ear cress).